The following is a 487-amino-acid chain: Cyclic AMP-dependent transcription factor ATF-2 (487 aa).

Residues Phe7–His31 form a C2H2-type zinc finger. Thr34 is subject to Phosphothreonine; by PKC/PRKCH. Ser44 is subject to Phosphoserine; by VRK1. Phosphothreonine occurs at positions 51 and 53. Residue Thr55 is modified to Phosphothreonine; by VRK1. Residues Ser72 and Ser94 each carry the phosphoserine modification. A Phosphothreonine modification is found at Thr98. Ser103 carries the phosphoserine; by PKC/PRKCA and PKC/PRKCB modification. Disordered regions lie at residues Glu107–Glu130 and Pro241–Arg355. The residue at position 118 (Ser118) is a Phosphoserine. The span at Leu264–Asp275 shows a compositional bias: polar residues. The tract at residues Lys278 to Gly281 is essential for its histone acetyltransferase activity. Low complexity predominate over residues Pro300 to Pro316. At Ser310 the chain carries Phosphoserine. Position 322 is a phosphoserine; by PKC/PRKCA and PKC/PRKCB (Ser322). Basic and acidic residues predominate over residues Ala328–Arg345. The region spanning Asp334–His397 is the bZIP domain. Residues Lys336–Lys356 form a basic motif region. Lys339 carries the post-translational modification N6-acetyllysine. Ser349 is modified (phosphoserine; by PKC/PRKCA and PKC/PRKCB). Lys356 carries the post-translational modification N6-acetyllysine. The interval Leu362–Leu390 is leucine-zipper. A Nuclear export signal motif is present at residues Val387–Ala396. The interval Lys407–Ser487 is disordered. Phosphoserine occurs at positions 424 and 428. A compositionally biased stretch (polar residues) spans Val425–His436. Residues Ser437–Ser449 are compositionally biased toward low complexity. Over residues Ser457 to Ala470 the composition is skewed to polar residues. Residues Ser472 and Ser480 each carry the phosphoserine; by ATM modification. Over residues Pro478–Ser487 the composition is skewed to polar residues.

It belongs to the bZIP family. ATF subfamily. Binds DNA as a dimer and can form a homodimer in the absence of DNA. Can form a heterodimer with JUN. Heterodimerization is essential for its transcriptional activity. Interacts with SMAD3 and SMAD4. Binds through its N-terminal region to UTF1 which acts as a coactivator of ATF2 transcriptional activity. Interacts with the HK1/VDAC1 complex. Interacts with NBN, MRE11, XPO1, KAT5 and CUL3. Post-translationally, phosphorylation of Thr-51 by MAPK14 and MAPK11, and at Thr-53 by MAPK1/ERK2, MAPK3/ERK1, MAPK11, MAPK12 and MAPK14 in response to external stimulus like insulin causes increased transcriptional activity. Phosphorylated by PLK3 following hyperosmotic stress. Also phosphorylated and activated by JNK and CaMK4. ATM-mediated phosphorylation at Ser-472 and Ser-480 stimulates its function in DNA damage response. Phosphorylation at Ser-44, Thr-55 and Ser-103 activates its transcriptional activity. Phosphorylation at Thr-51 or Thr-53 enhances acetylation of histones H2B and H4.

Its subcellular location is the nucleus. The protein resides in the cytoplasm. The protein localises to the mitochondrion outer membrane. In terms of biological role, transcriptional activator which regulates the transcription of various genes, including those involved in anti-apoptosis, cell growth, and DNA damage response. Dependent on its binding partner, binds to CRE (cAMP response element) consensus sequences (5'-TGACGTCA-3') or to AP-1 (activator protein 1) consensus sequences (5'-TGACTCA-3'). In the nucleus, contributes to global transcription and the DNA damage response, in addition to specific transcriptional activities that are related to cell development, proliferation and death. In the cytoplasm, interacts with and perturbs HK1- and VDAC1-containing complexes at the mitochondrial outer membrane, thereby impairing mitochondrial membrane potential, inducing mitochondrial leakage and promoting cell death. The phosphorylated form (mediated by ATM) plays a role in the DNA damage response and is involved in the ionizing radiation (IR)-induced S phase checkpoint control and in the recruitment of the MRN complex into the IR-induced foci (IRIF). Exhibits histone acetyltransferase (HAT) activity which specifically acetylates histones H2B and H4 in vitro. In concert with CUL3 and RBX1, promotes the degradation of KAT5 thereby attenuating its ability to acetylate and activate ATM. Can elicit oncogenic or tumor suppressor activities depending on the tissue or cell type. The chain is Cyclic AMP-dependent transcription factor ATF-2 (Atf2) from Rattus norvegicus (Rat).